Reading from the N-terminus, the 400-residue chain is Deoxyguanosinetriphosphate triphosphohydrolase-like protein (400 aa).

The region spanning 73–215 is the HD domain; the sequence is RLTHSIEVSQ…AAIADDIAYN (143 aa).

This sequence belongs to the dGTPase family. Type 2 subfamily.

This is Deoxyguanosinetriphosphate triphosphohydrolase-like protein from Bartonella tribocorum (strain CIP 105476 / IBS 506).